The chain runs to 1340 residues: Protein SHORT ROOT IN SALT MEDIUM 1 (1340 aa).

Disordered stretches follow at residues 1–73 (MHRD…RSHL), 161–185 (YGEQSSSYLGRELQNEPTRRYADPS), 357–473 (EEER…IRRS), 723–750 (TVEVTKDAEKKSPGDTSGTPTTGTKKTV), 784–990 (PETT…PPRA), and 1063–1269 (RNQR…KREE). The segment covering 7–39 (SSRGTGYGQQQYGSQSGYSQNLGSGYPGSSVSG) has biased composition (low complexity). The span at 46-60 (QISLSSRHPSITGAP) shows a compositional bias: polar residues. Basic and acidic residues-rich tracts occupy residues 173 to 182 (LQNEPTRRYA), 357 to 470 (EEER…EASI), and 723 to 735 (TVEVTKDAEKKSP). The stretch at 355–426 (LREEERRRED…RERKRALEIK (72 aa)) forms a coiled coil. Residues 810–824 (GDTSDPSAKANEQTP) show a composition bias toward polar residues. A compositionally biased stretch (basic residues) spans 828-840 (IVKKKIIKRVAKR). Composition is skewed to basic and acidic residues over residues 841 to 872 (KVAEIDNKMDGDSKKDGDSDEKKVMEVGKKSS), 887 to 988 (EDVK…EEPP), 1069 to 1097 (HQEELSVKQNEAKSQDKRQKTAEHEDKEA), and 1105 to 1138 (PGKDDKETSGKETVDGSREIADKEAVAKTKETLG). A coiled-coil region spans residues 1052 to 1086 (LKKLRVKIVRQRNQRKRHQEELSVKQNEAKSQDKR). Acidic residues predominate over residues 1153-1204 (ENQDEEDDDGDDDPEEDPEEDPEEDPEEDPEEDPEECEEMDVANTEQEEPAE). 2 stretches are compositionally biased toward basic and acidic residues: residues 1205–1214 (EPQKKEENLE) and 1229–1257 (TDNRKEERGPNDSKTEIKPKSETEKHGKQ). One can recognise an EF-hand domain in the interval 1270–1305 (TVDKELLQAFRFFDRNQAGYVRVEDMRVTIHSLGKF).

In terms of assembly, interacts with BHLH148/RITF1. Expressed ubiquitously at high levels, including in guard cells.

It is found in the nucleus. Functionally, required for salt tolerance and sodium (Na) homeostasis after salt stress. Together with BHLH148/RITF1, regulates the transcription of several genes involved in the detoxification of reactive oxygen species (ROS) generated by salt (NaCl) stress. Binds calcium. The protein is Protein SHORT ROOT IN SALT MEDIUM 1 of Arabidopsis thaliana (Mouse-ear cress).